A 237-amino-acid polypeptide reads, in one-letter code: Mannose-specific lectin alpha chain (237 aa).

The Mn(2+) site is built by glutamate 8 and aspartate 10. The Ca(2+) site is built by aspartate 10, tyrosine 12, asparagine 14, and aspartate 19. Tyrosine 12 serves as a coordination point for a carbohydrate. Residues aspartate 19, histidine 24, and serine 34 each contribute to the Mn(2+) site. 99–100 serves as a coordination point for a carbohydrate; the sequence is LY. Aspartate 208 lines the Ca(2+) pocket. Arginine 228 contacts a carbohydrate.

This sequence belongs to the leguminous lectin family. Homotetramer. Post-translationally, the beta and gamma chains are produced by partial proteolytic processing of the lectin alpha chain by an asparaginyl endopeptidase.

D-mannose/D-glucose-binding lectin. Also binds derivatives of glucose and mannose such as more complex glycans. The protein is Mannose-specific lectin alpha chain of Cymbosema roseum (Dioclea purpurea).